Reading from the N-terminus, the 121-residue chain is MARIAGVNIPNHQHTEIGLTAIYGIGRTRSRDICVAAGVAFSKKVKDLTDADLEKLREEVGKFIVEGDLRRETTMNIKRLMDLGCYRGVRHRKGLPLRGQRTRTNARTRKGPRRAAQSLKK.

Residues Gly-94–Lys-121 are disordered.

It belongs to the universal ribosomal protein uS13 family. In terms of assembly, part of the 30S ribosomal subunit. Forms a loose heterodimer with protein S19. Forms two bridges to the 50S subunit in the 70S ribosome.

Located at the top of the head of the 30S subunit, it contacts several helices of the 16S rRNA. In the 70S ribosome it contacts the 23S rRNA (bridge B1a) and protein L5 of the 50S subunit (bridge B1b), connecting the 2 subunits; these bridges are implicated in subunit movement. Contacts the tRNAs in the A and P-sites. In Paraburkholderia phymatum (strain DSM 17167 / CIP 108236 / LMG 21445 / STM815) (Burkholderia phymatum), this protein is Small ribosomal subunit protein uS13.